The chain runs to 201 residues: MYEYIKGKYIGINKDYIIVDNNGVGYKIFTSGNTMANMPKPEEDVLIYLTQIVRQDFIGLYGFLTKDELEMFNKLLTINGVGAKASLSLLSICTVNNLKYAIITGDEKTIVKAPGIGKKTAQRIILELKDKFKSTDISKGNSEINNLDVDYDEHSKKLEEVRFALNSLGYSEKETDRAINNVDKSEGIENIIKSCLRFLMN.

Residues 1–64 (MYEYIKGKYI…QDFIGLYGFL (64 aa)) are domain I. The tract at residues 65–143 (TKDELEMFNK…STDISKGNSE (79 aa)) is domain II. The tract at residues 144–154 (INNLDVDYDEH) is flexible linker. The segment at 154–201 (HSKKLEEVRFALNSLGYSEKETDRAINNVDKSEGIENIIKSCLRFLMN) is domain III.

This sequence belongs to the RuvA family. As to quaternary structure, homotetramer. Forms an RuvA(8)-RuvB(12)-Holliday junction (HJ) complex. HJ DNA is sandwiched between 2 RuvA tetramers; dsDNA enters through RuvA and exits via RuvB. An RuvB hexamer assembles on each DNA strand where it exits the tetramer. Each RuvB hexamer is contacted by two RuvA subunits (via domain III) on 2 adjacent RuvB subunits; this complex drives branch migration. In the full resolvosome a probable DNA-RuvA(4)-RuvB(12)-RuvC(2) complex forms which resolves the HJ.

The protein resides in the cytoplasm. Its function is as follows. The RuvA-RuvB-RuvC complex processes Holliday junction (HJ) DNA during genetic recombination and DNA repair, while the RuvA-RuvB complex plays an important role in the rescue of blocked DNA replication forks via replication fork reversal (RFR). RuvA specifically binds to HJ cruciform DNA, conferring on it an open structure. The RuvB hexamer acts as an ATP-dependent pump, pulling dsDNA into and through the RuvAB complex. HJ branch migration allows RuvC to scan DNA until it finds its consensus sequence, where it cleaves and resolves the cruciform DNA. The chain is Holliday junction branch migration complex subunit RuvA from Clostridium acetobutylicum (strain ATCC 824 / DSM 792 / JCM 1419 / IAM 19013 / LMG 5710 / NBRC 13948 / NRRL B-527 / VKM B-1787 / 2291 / W).